Here is a 221-residue protein sequence, read N- to C-terminus: Large ribosomal subunit protein uL3 (221 aa).

A disordered region spans residues 131–165 (HNQSRGPETHGSRHHRRPGSMGPIKGKIKGKKLPG).

This sequence belongs to the universal ribosomal protein uL3 family. Part of the 50S ribosomal subunit. Forms a cluster with proteins L14 and L19.

In terms of biological role, one of the primary rRNA binding proteins, it binds directly near the 3'-end of the 23S rRNA, where it nucleates assembly of the 50S subunit. The sequence is that of Large ribosomal subunit protein uL3 from Phytoplasma australiense.